The primary structure comprises 283 residues: Apidaecins type 73 (283 aa).

An N-terminal signal peptide occupies residues 1 to 18; sequence KNFALAILVVTFVVAVFG. 9 consecutive propeptides follow at residues 19–41, 62–69, 90–97, 118–125, 146–153, 174–181, 202–209, 230–237, and 258–265; these read NTNL…EAEP, EAEPEAEP, EAELEAEP, and EAKPEAKP. Residues 19–283 form a disordered region; the sequence is NTNLDPPTRP…PQPRPPHPRI (265 aa). Positions 273-283 are enriched in pro residues; that stretch reads IPQPRPPHPRI.

Belongs to the apidaecin family.

The protein localises to the secreted. Apidaecins have bactericidal activity; predominantly against Gram-negative bacteria. They seem to interfere with cell propagation. The sequence is that of Apidaecins type 73 (APID73) from Apis mellifera (Honeybee).